Here is a 546-residue protein sequence, read N- to C-terminus: Chaperonin GroEL (546 aa).

ATP contacts are provided by residues 30–33 (TLGP), Lys-51, 87–91 (DGTTT), Gly-415, 479–481 (NAA), and Asp-495. The segment at 526–546 (KEDAPMPGGMPGGMGGMGMDM) is disordered. The segment covering 534 to 546 (GMPGGMGGMGMDM) has biased composition (gly residues).

It belongs to the chaperonin (HSP60) family. Forms a cylinder of 14 subunits composed of two heptameric rings stacked back-to-back. Interacts with the co-chaperonin GroES.

It localises to the cytoplasm. The enzyme catalyses ATP + H2O + a folded polypeptide = ADP + phosphate + an unfolded polypeptide.. Its function is as follows. Together with its co-chaperonin GroES, plays an essential role in assisting protein folding. The GroEL-GroES system forms a nano-cage that allows encapsulation of the non-native substrate proteins and provides a physical environment optimized to promote and accelerate protein folding. The chain is Chaperonin GroEL from Burkholderia cepacia (Pseudomonas cepacia).